A 321-amino-acid chain; its full sequence is Olfactory receptor 51V1 (321 aa).

Topologically, residues Met-1 to Pro-34 are extracellular. N-linked (GlcNAc...) asparagine glycosylation occurs at Asn-18. A helical membrane pass occupies residues Trp-35–Leu-55. Topologically, residues His-56–Ser-63 are cytoplasmic. Residues Leu-64–Leu-84 form a helical membrane-spanning segment. Residues Ser-85–Ala-108 lie on the Extracellular side of the membrane. The cysteines at positions 106 and 188 are disulfide-linked. Residues Gln-109 to Phe-129 form a helical membrane-spanning segment. Topologically, residues Asp-130 to Ser-148 are cytoplasmic. The helical transmembrane segment at Arg-149–Ile-169 threads the bilayer. Topologically, residues Ile-170–Ser-205 are extracellular. A helical transmembrane segment spans residues Tyr-206–Ser-226. Residues Tyr-227 to Leu-246 are Cytoplasmic-facing. A helical transmembrane segment spans residues Phe-247 to Leu-267. The Extracellular segment spans residues Thr-268–His-282. A helical membrane pass occupies residues Val-283–Val-303. Residues Lys-304–Tyr-321 lie on the Cytoplasmic side of the membrane.

This sequence belongs to the G-protein coupled receptor 1 family.

It localises to the cell membrane. Functionally, odorant receptor. The chain is Olfactory receptor 51V1 (OR51V1) from Homo sapiens (Human).